A 310-amino-acid polypeptide reads, in one-letter code: Carbamate kinase 1 (310 aa).

It belongs to the carbamate kinase family.

Its subcellular location is the cytoplasm. It catalyses the reaction hydrogencarbonate + NH4(+) + ATP = carbamoyl phosphate + ADP + H2O + H(+). It functions in the pathway metabolic intermediate metabolism; carbamoyl phosphate degradation; CO(2) and NH(3) from carbamoyl phosphate: step 1/1. The polypeptide is Carbamate kinase 1 (arcC1) (Staphylococcus aureus (strain MRSA252)).